A 632-amino-acid chain; its full sequence is Actin-related protein 8 (632 aa).

Residues 1–30 (MTQAEREQENGKEKEKEREKEKEKEKEQRG) are compositionally biased toward basic and acidic residues. A disordered region spans residues 1 to 43 (MTQAEREQENGKEKEKEREKEKEKEKEQRGIKRPIAPPVIPEP). Residue 288 to 291 (DVGD) coordinates ATP. Disordered stretches follow at residues 410–429 (MTSLQHRSQGDPEDPHDEHY) and 434–494 (QSKQ…GGAE). Residues 434–443 (QSKQDQSSKA) are compositionally biased toward low complexity.

It belongs to the actin family. ARP8 subfamily. As to quaternary structure, component of the chromatin remodeling INO80 complex; specifically part of a complex module associated with the DBINO domain of INO80. Exists as monomers and dimers, but the dimer is most probably the biologically relevant form required for stable interactions with histones that exploits the twofold symmetry of the nucleosome core.

Its subcellular location is the nucleus. The protein localises to the chromosome. Functionally, plays an important role in the functional organization of mitotic chromosomes. Exhibits low basal ATPase activity, and unable to polymerize. Its function is as follows. Proposed core component of the chromatin remodeling INO80 complex which is involved in transcriptional regulation, DNA replication and probably DNA repair. Required for the recruitment of INO80 (and probably the INO80 complex) to sites of DNA damage Strongly prefer nucleosomes and H3-H4 tetramers over H2A-H2B dimers, suggesting it may act as a nucleosome recognition module within the complex. This Salmo salar (Atlantic salmon) protein is Actin-related protein 8 (actr8).